Consider the following 414-residue polypeptide: CCA-adding enzyme (414 aa).

Residues Gly8 and Arg11 each contribute to the ATP site. The CTP site is built by Gly8 and Arg11. Mg(2+)-binding residues include Asp21 and Asp23. 3 residues coordinate ATP: Arg92, Arg138, and Arg141. Residues Arg92, Arg138, and Arg141 each coordinate CTP.

This sequence belongs to the tRNA nucleotidyltransferase/poly(A) polymerase family. Bacterial CCA-adding enzyme type 2 subfamily. Mg(2+) serves as cofactor.

It catalyses the reaction a tRNA precursor + 2 CTP + ATP = a tRNA with a 3' CCA end + 3 diphosphate. It carries out the reaction a tRNA with a 3' CCA end + 2 CTP + ATP = a tRNA with a 3' CCACCA end + 3 diphosphate. In terms of biological role, catalyzes the addition and repair of the essential 3'-terminal CCA sequence in tRNAs without using a nucleic acid template. Adds these three nucleotides in the order of C, C, and A to the tRNA nucleotide-73, using CTP and ATP as substrates and producing inorganic pyrophosphate. tRNA 3'-terminal CCA addition is required both for tRNA processing and repair. Also involved in tRNA surveillance by mediating tandem CCA addition to generate a CCACCA at the 3' terminus of unstable tRNAs. While stable tRNAs receive only 3'-terminal CCA, unstable tRNAs are marked with CCACCA and rapidly degraded. The protein is CCA-adding enzyme of Buchnera aphidicola subsp. Cinara cedri (strain Cc).